The primary structure comprises 1576 residues: Proton channel OtopLc (1576 aa).

Disordered stretches follow at residues 1–602 and 621–736; these read MDSS…SSPP and QIGS…SSPV. Low complexity-rich tracts occupy residues 58–67 and 76–85; these read SLAEEVLLLV and LLGQPLPTLT. Composition is skewed to acidic residues over residues 103–116, 159–171, 186–198, and 206–216; these read DEGDDEDEREEPVP, DDGEGEETDDAEE, SNPDEEEEEEEQE, and PKEEDEEEDDD. A compositionally biased stretch (pro residues) spans 219 to 228; sequence TPPPPLPPLP. Over residues 229-241 the composition is skewed to polar residues; the sequence is SNFSYVQGHNLGQ. Asparagine 230 carries an N-linked (GlcNAc...) asparagine glycan. Residues 243–252 show a composition bias toward low complexity; sequence TPPLTKSPSN. Residues 253–264 show a composition bias toward pro residues; sequence SPSPPVTPPPCP. A glycan (N-linked (GlcNAc...) asparagine) is linked at asparagine 267. Over residues 316–341 the composition is skewed to acidic residues; that stretch reads DQPEPEDQPPEPENEPEPEPEPEPEP. Positions 347 to 356 are enriched in basic and acidic residues; the sequence is AREDYSRSLD. A compositionally biased stretch (polar residues) spans 362–376; the sequence is TTITTPPSNGYSASS. The span at 384–393 shows a compositional bias: basic and acidic residues; that stretch reads HFAELDEDRG. Positions 402–419 are enriched in acidic residues; sequence QEPEEEVEEEEEEEEEEL. Basic and acidic residues predominate over residues 420 to 433; that stretch reads TKETDEISVDRESL. The span at 434 to 457 shows a compositional bias: polar residues; sequence QDQGGDSISSPRPASILTGSISTS. Over residues 465-507 the composition is skewed to low complexity; it reads SPKPESRGPSRSGSQRSQLRSGSQQGSIAESRGGSRIGSRTGS. 2 stretches are compositionally biased toward polar residues: residues 519–534 and 545–555; these read PQASLKSQTSIRSQGQ and KSGSQRMQSPQ. Positions 563 to 575 are enriched in pro residues; that stretch reads MPSPPLMRSPPPE. Residues 661–685 are compositionally biased toward low complexity; sequence AAAAPAVTTTAATTAVTSQPRSHFT. Residues 686–709 are compositionally biased toward basic residues; sequence SSHHHYHLPHQFQHPHHQNHHTHS. Residues 741–761 form a helical membrane-spanning segment; that stretch reads LFMAGVAPPIAAGAGSLMAMP. Positions 771–845 are disordered; that stretch reads GRVSARSGSQ…GSSSQPALSG (75 aa). Residues 776–799 show a composition bias toward polar residues; sequence RSGSQHHVTIDESSLPSHKGNIQE. A compositionally biased stretch (low complexity) spans 826–839; the sequence is DSSDPPSSPGGSSS. Transmembrane regions (helical) follow at residues 891–911 and 931–951; these read ALATLFSALYGKLLVVMGIAF and LYLYIGSMIFLLFMYATLIWG. A compositionally biased stretch (polar residues) spans 962 to 973; that stretch reads PSKSATKASGTD. Residues 962–1001 are disordered; sequence PSKSATKASGTDSMDESDTDSNSVHHRLPPPIPVRRPSLL. Transmembrane regions (helical) follow at residues 1019–1039, 1051–1071, and 1084–1104; these read GAVAFGIGSMIYSGLEFGQYF, LLALTPATRMAFIFIQMYFIF, and IIARFGLMHMIGTNLAVWLNV. An N-linked (GlcNAc...) asparagine glycan is attached at asparagine 1121. 7 consecutive transmembrane segments (helical) span residues 1179 to 1199, 1239 to 1259, 1272 to 1292, 1310 to 1330, 1340 to 1360, 1381 to 1401, and 1412 to 1432; these read FLFPCTIEYSLICAAILYVMW, FVGILILVLTIISLIIFFVLI, VTICELLIYGTATIATLVGMI, ILLVGAQTGSFLYNIFTVIAG, LVPINALASIVQTACQTMFIL, IVTFMLVVNLAMWAISTLEKS, and FYGLWAWTIITHVSMPLAIFY. Asparagine 1479 carries an N-linked (GlcNAc...) asparagine glycan. Positions 1498 to 1549 are disordered; the sequence is EEVDSGESNSAEDAGAGAGSGGSRGSGGGAGAAEAGEAGEEGQQGGDSSCGL. Positions 1503–1512 are enriched in low complexity; sequence GESNSAEDAG. Residues 1513-1528 show a composition bias toward gly residues; it reads AGAGSGGSRGSGGGAG.

It belongs to the otopetrin family.

The protein resides in the cell membrane. Its function is as follows. Proton-selective channel that specifically transports protons into cells. Proton-selective channel activity is probably required in cell types that use changes in intracellular pH for cell signaling or to regulate biochemical or developmental processes. This is Proton channel OtopLc from Drosophila melanogaster (Fruit fly).